The primary structure comprises 204 residues: Ribosome maturation factor RimP (204 aa).

It belongs to the RimP family.

It is found in the cytoplasm. In terms of biological role, required for maturation of 30S ribosomal subunits. This is Ribosome maturation factor RimP from Allorhizobium ampelinum (strain ATCC BAA-846 / DSM 112012 / S4) (Agrobacterium vitis (strain S4)).